Reading from the N-terminus, the 254-residue chain is Segregation and condensation protein A (254 aa).

This sequence belongs to the ScpA family. Component of a cohesin-like complex composed of ScpA, ScpB and the Smc homodimer, in which ScpA and ScpB bind to the head domain of Smc. The presence of the three proteins is required for the association of the complex with DNA.

It localises to the cytoplasm. In terms of biological role, participates in chromosomal partition during cell division. May act via the formation of a condensin-like complex containing Smc and ScpB that pull DNA away from mid-cell into both cell halves. In Brevibacillus brevis (strain 47 / JCM 6285 / NBRC 100599), this protein is Segregation and condensation protein A.